We begin with the raw amino-acid sequence, 21 residues long: QHSTDYDEEEEDRAKLHLDAR.

Gln-1 carries the post-translational modification Pyrrolidone carboxylic acid. Acidic residues predominate over residues 1-11 (QHSTDYDEEEE). The tract at residues 1-21 (QHSTDYDEEEEDRAKLHLDAR) is disordered. Residue Thr-4 is glycosylated (O-linked (GalNAc...) threonine). Tyr-6 is subject to Sulfotyrosine. Residues 12–21 (DRAKLHLDAR) are compositionally biased toward basic and acidic residues.

In terms of assembly, heterohexamer; disulfide linked. Contains 2 sets of 3 non-identical chains (alpha, beta and gamma). The 2 heterotrimers are in head to head conformation with the N-termini in a small central domain. In terms of processing, conversion of fibrinogen to fibrin is triggered by thrombin, which cleaves fibrinopeptides A and B from alpha and beta chains, and thus exposes the N-terminal polymerization sites responsible for the formation of the soft clot.

Its subcellular location is the secreted. Functionally, cleaved by the protease thrombin to yield monomers which, together with fibrinogen alpha (FGA) and fibrinogen gamma (FGG), polymerize to form an insoluble fibrin matrix. Fibrin has a major function in hemostasis as one of the primary components of blood clots. In addition, functions during the early stages of wound repair to stabilize the lesion and guide cell migration during re-epithelialization. Was originally thought to be essential for platelet aggregation, based on in vitro studies using anticoagulated blood. However subsequent studies have shown that it is not absolutely required for thrombus formation in vivo. Enhances expression of SELP in activated platelets. Maternal fibrinogen is essential for successful pregnancy. Fibrin deposition is also associated with infection, where it protects against IFNG-mediated hemorrhage. May also facilitate the antibacterial immune response via both innate and T-cell mediated pathways. In Cervus elaphus (Red deer), this protein is Fibrinogen beta chain (FGB).